The following is a 383-amino-acid chain: Succinyl-diaminopimelate desuccinylase (383 aa).

Histidine 73 provides a ligand contact to Zn(2+). Aspartate 75 is a catalytic residue. Zn(2+) is bound at residue aspartate 107. Residue glutamate 141 is the Proton acceptor of the active site. Glutamate 142, glutamate 170, and histidine 356 together coordinate Zn(2+).

Belongs to the peptidase M20A family. DapE subfamily. In terms of assembly, homodimer. Zn(2+) serves as cofactor. Co(2+) is required as a cofactor.

The enzyme catalyses N-succinyl-(2S,6S)-2,6-diaminopimelate + H2O = (2S,6S)-2,6-diaminopimelate + succinate. It functions in the pathway amino-acid biosynthesis; L-lysine biosynthesis via DAP pathway; LL-2,6-diaminopimelate from (S)-tetrahydrodipicolinate (succinylase route): step 3/3. Functionally, catalyzes the hydrolysis of N-succinyl-L,L-diaminopimelic acid (SDAP), forming succinate and LL-2,6-diaminopimelate (DAP), an intermediate involved in the bacterial biosynthesis of lysine and meso-diaminopimelic acid, an essential component of bacterial cell walls. The chain is Succinyl-diaminopimelate desuccinylase from Pseudomonas putida (strain W619).